We begin with the raw amino-acid sequence, 89 residues long: Small ribosomal subunit protein uS15 (89 aa).

It belongs to the universal ribosomal protein uS15 family. As to quaternary structure, part of the 30S ribosomal subunit. Forms a bridge to the 50S subunit in the 70S ribosome, contacting the 23S rRNA.

Functionally, one of the primary rRNA binding proteins, it binds directly to 16S rRNA where it helps nucleate assembly of the platform of the 30S subunit by binding and bridging several RNA helices of the 16S rRNA. Its function is as follows. Forms an intersubunit bridge (bridge B4) with the 23S rRNA of the 50S subunit in the ribosome. In Vibrio vulnificus (strain YJ016), this protein is Small ribosomal subunit protein uS15.